The primary structure comprises 503 residues: Secreted RxLR effector protein RXLR-C08 (503 aa).

The signal sequence occupies residues 1–22 (MRLCGVASAFLSTLILIAHIDA). N-linked (GlcNAc...) asparagine glycans are attached at residues Asn-27, Asn-35, and Asn-45. Positions 57 to 60 (DEER) match the dEER motif. Asn-108, Asn-197, and Asn-374 each carry an N-linked (GlcNAc...) asparagine glycan.

The protein belongs to the RxLR effector family.

It localises to the secreted. Its subcellular location is the host Golgi apparatus. In terms of biological role, secreted effector that suppresses pattern-triggered immunity (PTI) in plant host. This Plasmopara halstedii (Downy mildew of sunflower) protein is Secreted RxLR effector protein RXLR-C08.